Reading from the N-terminus, the 264-residue chain is Probable amino-acid-binding protein YxeM (264 aa).

The N-terminal stretch at 1-20 (MKMKKWTVLVVAALLAVLSA) is a signal peptide. Residue C21 is the site of N-palmitoyl cysteine attachment. A lipid anchor (S-diacylglycerol cysteine) is attached at C21.

It belongs to the bacterial solute-binding protein 3 family. In terms of assembly, the complex is composed of two ATP-binding proteins (YxeO), two transmembrane proteins (YxeN) and a solute-binding protein (YxeM).

The protein resides in the cell membrane. Its subcellular location is the membrane raft. Probably part of the ABC transporter complex YxeMNO that could be involved in amino-acid import. May transport S-methylcysteine. The protein is Probable amino-acid-binding protein YxeM (yxeM) of Bacillus subtilis (strain 168).